A 139-amino-acid chain; its full sequence is Large ribosomal subunit protein uL13 (139 aa).

The protein belongs to the universal ribosomal protein uL13 family. Part of the 50S ribosomal subunit.

Functionally, this protein is one of the early assembly proteins of the 50S ribosomal subunit, although it is not seen to bind rRNA by itself. It is important during the early stages of 50S assembly. The protein is Large ribosomal subunit protein uL13 of Nitratiruptor sp. (strain SB155-2).